The primary structure comprises 198 residues: NAD(P)H dehydrogenase (quinone) (198 aa).

The Flavodoxin-like domain occupies 4-189; sequence VLVLYYSMYG…SIARYQGEYV (186 aa). FMN contacts are provided by residues 10–15 and 78–80; these read SMYGHI and TRF. Position 12 (Y12) interacts with NAD(+). W98 is a binding site for substrate. FMN contacts are provided by residues 113-118 and H133; that span reads STGTGG.

It belongs to the WrbA family. Requires FMN as cofactor.

The enzyme catalyses a quinone + NADH + H(+) = a quinol + NAD(+). It catalyses the reaction a quinone + NADPH + H(+) = a quinol + NADP(+). This is NAD(P)H dehydrogenase (quinone) from Escherichia fergusonii (strain ATCC 35469 / DSM 13698 / CCUG 18766 / IAM 14443 / JCM 21226 / LMG 7866 / NBRC 102419 / NCTC 12128 / CDC 0568-73).